The primary structure comprises 385 residues: Prophage integrase IntS (385 aa).

Residues 91–172 (NSFSAIYKEW…RCGEVFRYAI (82 aa)) enclose the Core-binding (CB) domain. The Tyr recombinase domain occupies 195–373 (KNFPFLPADQ…QYLDKRREMM (179 aa)). Active-site residues include arginine 234, lysine 261, histidine 324, arginine 327, and histidine 350. Tyrosine 360 (O-(3'-phospho-DNA)-tyrosine intermediate) is an active-site residue.

Belongs to the 'phage' integrase family.

Integrase is necessary for integration of the phage into the host genome by site-specific recombination. In conjunction with excisionase, integrase is also necessary for excision of the prophage from the host genome. The polypeptide is Prophage integrase IntS (intS) (Escherichia coli (strain K12)).